The sequence spans 248 residues: Homeobox protein Hox-A4 (248 aa).

Residues 23–107 form a disordered region; it reads YQQSGYIPNP…PDGGAGANAS (85 aa). A compositionally biased stretch (basic and acidic residues) spans 35-51; the sequence is YYERPKDTGFPHHDEPS. The short motif at 128 to 133 is the Antp-type hexapeptide element; it reads VYPWMK. Residues 149-208 constitute a DNA-binding region (homeobox); that stretch reads PKRSRTAYTRQQALELEKEFHFNRYLTRRRRVEIAHTMCLSERQVKIWFQNRRMKWKKEH. The interval 207–248 is disordered; it reads EHKLPNTKIRSSSSASSSASGAQQQQIKTGQQLVPTPCTAGL. Residues 217–238 are compositionally biased toward low complexity; the sequence is SSSSASSSASGAQQQQIKTGQQ.

It belongs to the Antp homeobox family. Deformed subfamily.

The protein resides in the nucleus. Sequence-specific transcription factor which is part of a developmental regulatory system that provides cells with specific positional identities on the anterior-posterior axis. The polypeptide is Homeobox protein Hox-A4 (hoxa4) (Morone saxatilis (Striped bass)).